The following is a 453-amino-acid chain: Bifunctional protein GlmU (453 aa).

The interval 1–225 (MNIVILAAGT…EWETLGVNSK (225 aa)) is pyrophosphorylase. UDP-N-acetyl-alpha-D-glucosamine contacts are provided by residues 6-9 (LAAG), Lys-20, Gln-71, 76-77 (GT), 98-100 (YGD), Gly-135, Glu-150, Asn-165, and Asn-223. Asp-100 provides a ligand contact to Mg(2+). Asn-223 serves as a coordination point for Mg(2+). The linker stretch occupies residues 226-246 (AQLAELERIHQRKLAEALLAD). The interval 247–453 (GVTLADPARI…GYVRPVKKKS (207 aa)) is N-acetyltransferase. Residues Arg-329 and Lys-347 each coordinate UDP-N-acetyl-alpha-D-glucosamine. The Proton acceptor role is filled by His-359. UDP-N-acetyl-alpha-D-glucosamine is bound by residues Tyr-362 and Asn-373. Acetyl-CoA contacts are provided by residues Ala-376, 382-383 (NY), Ser-401, and Ala-419.

The protein in the N-terminal section; belongs to the N-acetylglucosamine-1-phosphate uridyltransferase family. It in the C-terminal section; belongs to the transferase hexapeptide repeat family. Homotrimer. Mg(2+) is required as a cofactor.

The protein localises to the cytoplasm. It catalyses the reaction alpha-D-glucosamine 1-phosphate + acetyl-CoA = N-acetyl-alpha-D-glucosamine 1-phosphate + CoA + H(+). It carries out the reaction N-acetyl-alpha-D-glucosamine 1-phosphate + UTP + H(+) = UDP-N-acetyl-alpha-D-glucosamine + diphosphate. Its pathway is nucleotide-sugar biosynthesis; UDP-N-acetyl-alpha-D-glucosamine biosynthesis; N-acetyl-alpha-D-glucosamine 1-phosphate from alpha-D-glucosamine 6-phosphate (route II): step 2/2. It participates in nucleotide-sugar biosynthesis; UDP-N-acetyl-alpha-D-glucosamine biosynthesis; UDP-N-acetyl-alpha-D-glucosamine from N-acetyl-alpha-D-glucosamine 1-phosphate: step 1/1. It functions in the pathway bacterial outer membrane biogenesis; LPS lipid A biosynthesis. Catalyzes the last two sequential reactions in the de novo biosynthetic pathway for UDP-N-acetylglucosamine (UDP-GlcNAc). The C-terminal domain catalyzes the transfer of acetyl group from acetyl coenzyme A to glucosamine-1-phosphate (GlcN-1-P) to produce N-acetylglucosamine-1-phosphate (GlcNAc-1-P), which is converted into UDP-GlcNAc by the transfer of uridine 5-monophosphate (from uridine 5-triphosphate), a reaction catalyzed by the N-terminal domain. The protein is Bifunctional protein GlmU of Burkholderia thailandensis (strain ATCC 700388 / DSM 13276 / CCUG 48851 / CIP 106301 / E264).